Consider the following 216-residue polypeptide: Endoplasmic reticulum vesicle protein 25 (216 aa).

The signal sequence occupies residues 1–25; that stretch reads MGSSRLAMRSALGLFFLLFVQISLA. Residues 26 to 185 are Lumenal-facing; the sequence is LKFDIAAGKG…TNESTNERVK (160 aa). The GOLD domain maps to 36 to 126; the sequence is ERCIRNFVLK…HRSIELDVDI (91 aa). The helical transmembrane segment at 186–206 threads the bilayer; it reads WFAFGTMGMLVGLGVWQVIYL. Residues 207–216 lie on the Cytoplasmic side of the membrane; the sequence is RAYFRSKHLI.

This sequence belongs to the EMP24/GP25L family.

The protein resides in the endoplasmic reticulum membrane. It localises to the golgi apparatus membrane. Functionally, constituent of COPII-coated endoplasmic reticulum-derived transport vesicles. Required for efficient transport of a subset of secretory proteins to the Golgi. Facilitates retrograde transport from the Golgi to the endoplasmic reticulum. The polypeptide is Endoplasmic reticulum vesicle protein 25 (erv25) (Emericella nidulans (strain FGSC A4 / ATCC 38163 / CBS 112.46 / NRRL 194 / M139) (Aspergillus nidulans)).